Reading from the N-terminus, the 276-residue chain is Type 2 phosphatidylinositol 4,5-bisphosphate 4-phosphatase (276 aa).

The segment covering 1 to 10 (MAADGIDERS) has biased composition (basic and acidic residues). Positions 1–27 (MAADGIDERSPLISPSSGNVTPTAPPY) are disordered. The span at 13-27 (ISPSSGNVTPTAPPY) shows a compositional bias: polar residues. C106 is a catalytic residue. Positions 106-112 (CKDISRR) match the CX5R motif motif. 2 helical membrane passes run 211-231 (CCTY…LTVG) and 246-266 (WAVA…WGAI).

Its subcellular location is the late endosome membrane. It is found in the lysosome membrane. The enzyme catalyses a 1,2-diacyl-sn-glycero-3-phospho-(1D-myo-inositol-4,5-bisphosphate) + H2O = a 1,2-diacyl-sn-glycero-3-phospho-(1D-myo-inositol-5-phosphate) + phosphate. Catalyzes the hydrolysis of phosphatidylinositol-4,5-bisphosphate (PtdIns-4,5-P2) to phosphatidylinositol-4-phosphate (PtdIns-4-P). This chain is Type 2 phosphatidylinositol 4,5-bisphosphate 4-phosphatase (pip4p2), found in Xenopus tropicalis (Western clawed frog).